We begin with the raw amino-acid sequence, 135 residues long: Fluoride-specific ion channel FluC (135 aa).

4 helical membrane passes run 12–32, 42–62, 70–90, and 106–126; these read FLVI…LGLS, LGTL…VGIF, LAWK…FSTF, and AIGL…LGLL. Na(+) is bound by residues glycine 82 and threonine 85.

This sequence belongs to the fluoride channel Fluc/FEX (TC 1.A.43) family.

The protein localises to the cell inner membrane. The catalysed reaction is fluoride(in) = fluoride(out). Na(+) is not transported, but it plays an essential structural role and its presence is essential for fluoride channel function. Fluoride-specific ion channel. Important for reducing fluoride concentration in the cell, thus reducing its toxicity. This Dechloromonas aromatica (strain RCB) protein is Fluoride-specific ion channel FluC.